A 101-amino-acid chain; its full sequence is MIPGEILTDDGEHELNAGRATLSLVVANTGDRPVQVGSHYHFFEVNDALSFDRAAARGFRLNIAAGTAVRFEPGQTRTVELVALAGERAVYGFQGKVMGPL.

The protein belongs to the urease beta subunit family. In terms of assembly, heterotrimer of UreA (gamma), UreB (beta) and UreC (alpha) subunits. Three heterotrimers associate to form the active enzyme.

Its subcellular location is the cytoplasm. It catalyses the reaction urea + 2 H2O + H(+) = hydrogencarbonate + 2 NH4(+). It participates in nitrogen metabolism; urea degradation; CO(2) and NH(3) from urea (urease route): step 1/1. The polypeptide is Urease subunit beta (Burkholderia orbicola (strain AU 1054)).